The sequence spans 271 residues: MFSIQQPLLVFSDLDGTLLDSHSYDWQPAAPWLSRLHEANVPVILCSSKTSAEMLYLQKMLGLQGLPLIAENGAVIQLAEQWQNIDGFPRIISGISHSEICQVLNTLREKEHFKFTTFDDVDDATIAEWTGLSRSQAALTQLHEASVTLIWRDSDEHMAQFIARLNELGLQFMQGARFWHVLDASAGKDQAANWIIATYQQLSGRRPTTLGLGDGPNDAPLLEVMDYAVIVKGLNREGVHLHDEDPARVWRTQREGPEGWREGLDHFFSAR.

The active-site Nucleophile is the Asp13. Residues Asp13, Asp15, and Asp214 each coordinate Mg(2+).

Belongs to the HAD-like hydrolase superfamily. MPGP family. The cofactor is Mg(2+).

It localises to the cytoplasm. The enzyme catalyses 2-O-(alpha-D-mannosyl)-3-phosphoglycerate + H2O = (2R)-2-O-(alpha-D-mannosyl)-glycerate + phosphate. This chain is Mannosyl-3-phosphoglycerate phosphatase, found in Escherichia coli O127:H6 (strain E2348/69 / EPEC).